Consider the following 87-residue polypeptide: Small ribosomal subunit protein bS21 (87 aa).

Basic and acidic residues predominate over residues 35 to 52 (HYEKPSEKKAREKAEAVR). The segment at 35 to 87 (HYEKPSEKKAREKAEAVRRARKLARKKLQREGLLPSKPKPAFGADRRPSAAAR) is disordered. The segment covering 53–62 (RARKLARKKL) has biased composition (basic residues). Residues 78 to 87 (ADRRPSAAAR) are compositionally biased toward basic and acidic residues.

This is Small ribosomal subunit protein bS21 from Rhodopseudomonas palustris (strain ATCC BAA-98 / CGA009).